We begin with the raw amino-acid sequence, 164 residues long: HTH-type transcriptional regulator IscR (164 aa).

Residues 2 to 131 (RLTSKGRYAV…NNITLAELVN (130 aa)) form the HTH rrf2-type domain. The H-T-H motif DNA-binding region spans 28–51 (LADISERQGISLSYLEQLFSRLRK). Cys-92, Cys-98, and Cys-104 together coordinate [2Fe-2S] cluster. The disordered stretch occupies residues 143–164 (NNDTRRTANGRPQETINVNLRA). A compositionally biased stretch (polar residues) spans 152-164 (GRPQETINVNLRA).

Requires [2Fe-2S] cluster as cofactor.

Its function is as follows. Regulates the transcription of several operons and genes involved in the biogenesis of Fe-S clusters and Fe-S-containing proteins. In Yersinia pseudotuberculosis serotype O:1b (strain IP 31758), this protein is HTH-type transcriptional regulator IscR.